A 188-amino-acid chain; its full sequence is V-type proton ATPase subunit E (188 aa).

Belongs to the V-ATPase E subunit family.

Functionally, produces ATP from ADP in the presence of a proton gradient across the membrane. The polypeptide is V-type proton ATPase subunit E (Dictyoglomus thermophilum (strain ATCC 35947 / DSM 3960 / H-6-12)).